The primary structure comprises 299 residues: tRNA dimethylallyltransferase (299 aa).

13-20 (GPTASGKT) provides a ligand contact to ATP. 15–20 (TASGKT) is a substrate binding site. Positions 38-41 (DSRQ) are interaction with substrate tRNA.

It belongs to the IPP transferase family. As to quaternary structure, monomer. Requires Mg(2+) as cofactor.

The catalysed reaction is adenosine(37) in tRNA + dimethylallyl diphosphate = N(6)-dimethylallyladenosine(37) in tRNA + diphosphate. Functionally, catalyzes the transfer of a dimethylallyl group onto the adenine at position 37 in tRNAs that read codons beginning with uridine, leading to the formation of N6-(dimethylallyl)adenosine (i(6)A). This Prochlorococcus marinus (strain MIT 9211) protein is tRNA dimethylallyltransferase.